We begin with the raw amino-acid sequence, 599 residues long: Omega-hydroxyceramide transacylase (599 aa).

A PNPLA domain is found at 16 to 185 (ISFSGSGFLS…TSMQPCSFWT (170 aa)). The GXSXG motif lies at 51-55 (GTSAG). Ser53 functions as the Nucleophile in the catalytic mechanism. Asp172 functions as the Proton acceptor in the catalytic mechanism. The DGA/G motif lies at 172-174 (DGG). The segment at 289 to 563 (PPPPSLQNLP…PASKLKSAPC (275 aa)) is disordered. Polar residues-rich tracts occupy residues 325 to 335 (SSAAPSVQTPE) and 350 to 362 (VSIS…SPLS). Positions 443-454 (SPESPRLLLRSS) are enriched in low complexity. The segment covering 468–478 (PLSPSTPPAGP) has biased composition (pro residues). The segment covering 490–501 (ATGSPALSQLTG) has biased composition (polar residues). Residues 551–563 (SKKPASKLKSAPC) show a composition bias toward low complexity.

In terms of tissue distribution, specifically expressed in skin by keratinocytes, at the boundary area between the nucleated stratum granulosum and the denucleated stratum corneum in the epidermis (at protein level). Also expressed in stomach and other surface lining tissues like intestine and tongue. Also detected in testis as well as in other tissues but at very low level.

Its subcellular location is the cytoplasm. The catalysed reaction is an N-(omega-hydroxy-ultra-long chain fatty acyl)-sphingoid base + a (9Z,12Z)-octadecadienoyl-containing triacyl-sn-glycerol = an N-[omega-(9Z,12Z-octadecadienoyloxy)-O-ultra-long chain fatty acyl]-sphingoid base + a diacylglycerol. It catalyses the reaction an N-(omega-hydroxy-ultra-long chain fatty acyl)-sphing-4-enine + a (9Z,12Z)-octadecadienoyl-containing triacyl-sn-glycerol = an N-(omega-(9Z,12Z-octadecadienoyloxy)-ultra-long chain fatty acyl)-sphing-4-enine + a diacylglycerol. The enzyme catalyses N-(28-hydroxyoctacosanoyl)-sphing-4-enine + a (9Z,12Z)-octadecadienoyl-containing triacyl-sn-glycerol = N-(28-(9Z,12Z-octadecadienoyloxy)-octacosanoyl)-sphing-4-enine + a diacylglycerol. It carries out the reaction N-(30-hydroxytriacontanoyl)-sphing-4-enine + 1,2,3-tri-(9Z,12Z)-octadecadienoylglycerol = N-[30-(9Z,12Z-octadecadienoyloxy)-triacontanoyl]-sphing-4-enine + di-(9Z,12Z)-octadecadienoylglycerol. The catalysed reaction is N-(32-hydroxydotriacontanoyl)-sphing-4-enine + a (9Z,12Z)-octadecadienoyl-containing triacyl-sn-glycerol = N-(32-(9Z,12Z-octadecadienoyloxy)-dotricontanoyl)-sphing-4-enine + a diacylglycerol. It catalyses the reaction N-(32-hydroxydotriacontenoyl)-sphing-4-enine + a (9Z,12Z)-octadecadienoyl-containing triacyl-sn-glycerol = an N-(32-(9Z,12Z-octadecadienoyloxy)-dotriacontenoyl)-sphing-4-enine + a diacylglycerol. The enzyme catalyses an N-(34-hydroxytetratriacontenoyl)-sphing-4-enine + a (9Z,12Z)-octadecadienoyl-containing triacyl-sn-glycerol = an N-(34-(9Z,12Z-octadecadienoyloxy)-tetratriacontenoyl)-sphing-4-enine + a diacylglycerol. It carries out the reaction an N-(34-hydroxytetratriacontadienoyl)-sphing-4-enine + a (9Z,12Z)-octadecadienoyl-containing triacyl-sn-glycerol = an N-(34-(9Z,12Z-octadecadienoyloxy)-tetratriacontadienoyl)-sphing-4-enine + a diacylglycerol. The catalysed reaction is an N-(36-hydroxyhexatriacontenoyl)-sphing-4-enine + a (9Z,12Z)-octadecadienoyl-containing triacyl-sn-glycerol = an N-(36-(9Z,12Z-octadecadienoyloxy)-hexatriacontenoyl)-sphing-4-enine + a diacylglycerol. It catalyses the reaction an N-(36-hydroxyhexatriacontadienoyl)-sphing-4-enine + a (9Z,12Z)-octadecadienoyl-containing triacyl-sn-glycerol = an N-(36-(9Z,12Z-octadecadienoyloxy)-hexatriacontadienoyl)-sphing-4-enine + a diacylglycerol. The enzyme catalyses an N-(38-hydroxyoctatriacontenoyl)-sphing-4-enine + a (9Z,12Z)-octadecadienoyl-containing triacyl-sn-glycerol = an N-(38-(9Z,12Z-octadecadienoyloxy)-octatriacontenoyl)-sphing-4-enine + a diacylglycerol. In terms of biological role, omega-hydroxyceramide transacylase involved in the synthesis of omega-O-acylceramides (esterified omega-hydroxyacyl-sphingosine; EOS), which are extremely hydrophobic lipids involved in skin barrier formation. Catalyzes the last step of the synthesis of omega-O-acylceramides by transferring linoleic acid from triglycerides to an omega-hydroxyceramide. Omega-O-acylceramides, are required for the biogenesis of lipid lamellae in the stratum corneum and the formation of the cornified lipid envelope which are essential for the epidermis barrier function. These lipids also play a role in keratinocyte differentiation. May also act on omega-hydroxylated ultra-long chain fatty acids (omega-OH ULCFA) and acylglucosylceramides (GlcEOS). This chain is Omega-hydroxyceramide transacylase, found in Mus musculus (Mouse).